Consider the following 319-residue polypeptide: Protein-methionine methyltransferase laeA (319 aa).

The segment at 269–293 (REPQSGTCSVQRENGANGDRSTLSA) is disordered. Residues 270 to 293 (EPQSGTCSVQRENGANGDRSTLSA) are compositionally biased toward polar residues.

This sequence belongs to the methyltransferase superfamily. LaeA methyltransferase family. Component of the heterotrimeric velvet complex composed of laeA, veA and velB; VeA acting as a bridging protein between laeA and velB.

Its subcellular location is the nucleus. The enzyme catalyses L-methionyl-[protein] + S-adenosyl-L-methionine = S-methyl-L-methionyl-[protein] + S-adenosyl-L-homocysteine. Its function is as follows. Methyltransferase; component of the velvet transcription factor complex that acts as a global regulator for secondary metabolite gene expression. Controls the expression of the chaetoglobosin A biosynthesis cluster via the cheR transcription factor and the subsequent production of chaetoglobosin A. Positively regulates the expression of smtA and negatively regulates the expression of velB. LaeA also regulates pigmentation and spores production. The chain is Protein-methionine methyltransferase laeA from Chaetomium globosum (strain ATCC 6205 / CBS 148.51 / DSM 1962 / NBRC 6347 / NRRL 1970) (Soil fungus).